Here is a 157-residue protein sequence, read N- to C-terminus: SsrA-binding protein (157 aa).

Belongs to the SmpB family.

Its subcellular location is the cytoplasm. In terms of biological role, required for rescue of stalled ribosomes mediated by trans-translation. Binds to transfer-messenger RNA (tmRNA), required for stable association of tmRNA with ribosomes. tmRNA and SmpB together mimic tRNA shape, replacing the anticodon stem-loop with SmpB. tmRNA is encoded by the ssrA gene; the 2 termini fold to resemble tRNA(Ala) and it encodes a 'tag peptide', a short internal open reading frame. During trans-translation Ala-aminoacylated tmRNA acts like a tRNA, entering the A-site of stalled ribosomes, displacing the stalled mRNA. The ribosome then switches to translate the ORF on the tmRNA; the nascent peptide is terminated with the 'tag peptide' encoded by the tmRNA and targeted for degradation. The ribosome is freed to recommence translation, which seems to be the essential function of trans-translation. The protein is SsrA-binding protein of Chlorobaculum tepidum (strain ATCC 49652 / DSM 12025 / NBRC 103806 / TLS) (Chlorobium tepidum).